The chain runs to 251 residues: Prolactin-7C1 (251 aa).

Residues 1–30 form the signal peptide; it reads MLLSLTHPSFLAMLPMLLMSNLLQWEGVTS. Asn-57 is a glycosylation site (N-linked (GlcNAc...) asparagine). 2 cysteine pairs are disulfide-bonded: Cys-101–Cys-217 and Cys-234–Cys-242.

It belongs to the somatotropin/prolactin family. Expressed exclusively in the placenta. Expressed in spongiotrophoblast cells and trophoblast giant cells of the junctional zone and in labyrinthine trophoblast.

It localises to the secreted. This chain is Prolactin-7C1 (Prl7c1), found in Mus musculus (Mouse).